Consider the following 635-residue polypeptide: Cerevisin (635 aa).

Positions 1–19 (MKLENTLFTLGALGSISAA) are cleaved as a signal peptide. Residues 20–280 (LVIPNLENAA…VERDSIVEAT (261 aa)) constitute a propeptide that is removed on maturation. Basic and acidic residues-rich tracts occupy residues 35–50 (INKE…VEFT), 74–85 (KGQDKESPEFNG), 94–109 (SAHE…HESS), and 126–136 (GCHENKVEEKK). Residues 35–155 (INKEDHHERP…KHHEKTLEKG (121 aa)) are disordered. Basic residues predominate over residues 137–155 (MKGKKVKGKKHHEKTLEKG). The Inhibitor I9 domain maps to 182-278 (RYIIVFKRGA…DFVERDSIVE (97 aa)). Positions 289–614 (PWGLARISHR…KQELNMDEFI (326 aa)) constitute a Peptidase S8 domain. Active-site charge relay system residues include Asp-325 and His-357. A disulfide bridge links Cys-460 with Cys-491. Ser-519 acts as the Charge relay system in catalysis. Positions 575–635 (DTPNVLIYNG…RDILDKLNII (61 aa)) are excised as a propeptide. Asn-594 carries an N-linked (GlcNAc...) asparagine glycan.

This sequence belongs to the peptidase S8 family. Activated by N- and C-terminal proteolytic cleavage. Protease B (PrB/PRB1) processing requires at least 4 cleavages. First, the signal peptide is removed from the 76 kDa preproprotease B by signal peptidase in the ER. Then, PrB removes its own Pro-region (in trans) at the N-terminus, producing a 39 kDa form before exiting the ER. In the Golgi complex, the C-terminal Post-region of the 40 kDa proprotease B undergoes protease A (PrA/PEP4)-mediated processing to a 37 kDa intermediate, which in turn is quickly processed again by PrB in trans to yield the 31 kDa mature PrB. In terms of processing, glycosylated. Preproprotease B is a 76 kDa unglycosylated precursor that enters the endoplasmic reticulum (ER), where it receives one Asn-linked and an undetermined number of non-Asn-linked carbohydrate side chains. In the Golgi complex, the 39 kDa form becomes 40 kDa, due to elaboration of the Asn-linked side chain. The ultimate processing step removes a peptide containing the Asn-linked chain. Mature PrB has only non-Asn-linked carbohydrates.

Its subcellular location is the vacuole. The enzyme catalyses Hydrolysis of proteins with broad specificity, and of Bz-Arg-OEt &gt; Ac-Tyr-OEt. Does not hydrolyze peptide amides.. Its function is as follows. Vacuolar proteinase B involved in protein degradation in the vacuole. Among other substrates, acts on carboxypeptidase Y (cpY/PRC1) to activate it by processing its Pro-peptide. Required for meiosis and spore formation, and for optimal survival in stationary phase. The sequence is that of Cerevisin (PRB1) from Saccharomyces cerevisiae (strain ATCC 204508 / S288c) (Baker's yeast).